The primary structure comprises 249 residues: EID1-like F-box protein 2 (249 aa).

In terms of domain architecture, F-box spans 16–68 (HCTKGHLSEEVLFLMVQHLNWNPNVIATLSCVCKWFDDLAKRLLWKEFCRARA).

The sequence is that of EID1-like F-box protein 2 (EDL2) from Arabidopsis thaliana (Mouse-ear cress).